The chain runs to 61 residues: MTQAKTFKVTLTKSLIGRKENHIASARGLGLRKINHTVEVLDTPENRGMANKIYYMVKIEG.

Belongs to the universal ribosomal protein uL30 family. As to quaternary structure, part of the 50S ribosomal subunit.

In Francisella philomiragia subsp. philomiragia (strain ATCC 25017 / CCUG 19701 / FSC 153 / O#319-036), this protein is Large ribosomal subunit protein uL30.